Reading from the N-terminus, the 320-residue chain is Glucokinase (320 aa).

ATP is bound at residue 12–17 (GDIGGT).

Belongs to the bacterial glucokinase family.

It is found in the cytoplasm. It carries out the reaction D-glucose + ATP = D-glucose 6-phosphate + ADP + H(+). This is Glucokinase from Nitrobacter hamburgensis (strain DSM 10229 / NCIMB 13809 / X14).